The chain runs to 277 residues: Hydroxyethylthiazole kinase (277 aa).

M56 is a substrate binding site. The ATP site is built by R131 and T177. Residue A204 participates in substrate binding.

The protein belongs to the Thz kinase family. Mg(2+) is required as a cofactor.

It carries out the reaction 5-(2-hydroxyethyl)-4-methylthiazole + ATP = 4-methyl-5-(2-phosphooxyethyl)-thiazole + ADP + H(+). Its pathway is cofactor biosynthesis; thiamine diphosphate biosynthesis; 4-methyl-5-(2-phosphoethyl)-thiazole from 5-(2-hydroxyethyl)-4-methylthiazole: step 1/1. In terms of biological role, catalyzes the phosphorylation of the hydroxyl group of 4-methyl-5-beta-hydroxyethylthiazole (THZ). The sequence is that of Hydroxyethylthiazole kinase from Gemmatimonas aurantiaca (strain DSM 14586 / JCM 11422 / NBRC 100505 / T-27).